A 322-amino-acid polypeptide reads, in one-letter code: Malate dehydrogenase (322 aa).

Residues Gly10–Gly15 and Asp34 each bind NAD(+). Substrate contacts are provided by Arg83 and Arg89. Residues Asn96 and Ile119 to Asn121 each bind NAD(+). Asn121 and Arg152 together coordinate substrate. Residue His176 is the Proton acceptor of the active site.

Belongs to the LDH/MDH superfamily. MDH type 3 family.

The catalysed reaction is (S)-malate + NAD(+) = oxaloacetate + NADH + H(+). In terms of biological role, catalyzes the reversible oxidation of malate to oxaloacetate. The sequence is that of Malate dehydrogenase from Nitrobacter winogradskyi (strain ATCC 25391 / DSM 10237 / CIP 104748 / NCIMB 11846 / Nb-255).